Consider the following 184-residue polypeptide: Tumor necrosis factor alpha-induced protein 8-like protein 2 (184 aa).

Residue S3 is modified to Phosphoserine.

It belongs to the TNFAIP8 family. TNFAIP8L2 subfamily. May interact with CASP8; however, such result is unclear since could not reproduce the interaction with CASP8. Interacts with RAC1. Phosphorylated by TAK1/MAP3K7; this phosphorylation triggers association with BTRC and subsequent ubiquitination and degradation. In terms of processing, ubiquitinated in a BTRC-depdent manner; leading to degradation mediated through the proteasome pathway. Expressed in thymus, spleen, lymph node and small intestine, but not in liver, heart, muscle, testis, spinal cord or brain. Up-regulated in the spinal cord of mice with experimental autoimmune encephalomyelitis. Constitutively expressed by macrophages, B and T-lymphocytes at various developmental stages.

Its subcellular location is the cytoplasm. It is found in the nucleus. The protein resides in the lysosome. In terms of biological role, acts as a negative regulator of innate and adaptive immunity by maintaining immune homeostasis. Plays a regulatory role in the Toll-like signaling pathway by determining the strength of LPS-induced signaling and gene expression. Inhibits TCR-mediated T-cell activation and negatively regulate T-cell function to prevent hyperresponsiveness. Also inhibits autolysosome formation via negatively modulating MTOR activation by interacting with RAC1 and promoting the disassociation of the RAC1-MTOR complex. Plays an essential role in NK-cell biology by acting as a checkpoint and displaying an expression pattern correlating with NK-cell maturation process and by negatively regulating NK-cell maturation and antitumor immunity. Mechanistically, suppresses IL-15-triggered mTOR activity in NK-cells. This chain is Tumor necrosis factor alpha-induced protein 8-like protein 2 (Tnfaip8l2), found in Mus musculus (Mouse).